We begin with the raw amino-acid sequence, 108 residues long: uncharacterized protein (108 aa).

Residues 10 to 32 (LQAPYILCTSFITLKIHNFFFFF) traverse the membrane as a helical segment.

It localises to the membrane. This is an uncharacterized protein from Saccharomyces cerevisiae (strain ATCC 204508 / S288c) (Baker's yeast).